We begin with the raw amino-acid sequence, 339 residues long: Ferrochelatase (339 aa).

Fe cation-binding residues include His209 and Glu290.

Belongs to the ferrochelatase family.

Its subcellular location is the cytoplasm. The catalysed reaction is heme b + 2 H(+) = protoporphyrin IX + Fe(2+). The protein operates within porphyrin-containing compound metabolism; protoheme biosynthesis; protoheme from protoporphyrin-IX: step 1/1. In terms of biological role, catalyzes the ferrous insertion into protoporphyrin IX. This chain is Ferrochelatase, found in Rhizobium meliloti (strain 1021) (Ensifer meliloti).